A 271-amino-acid chain; its full sequence is Phosphatidylglycerol--prolipoprotein diacylglyceryl transferase (271 aa).

7 consecutive transmembrane segments (helical) span residues 25 to 45 (WYGI…KFFV), 60 to 80 (YFIW…ILIY), 103 to 123 (FVGI…IATL), 134 to 154 (WIFL…GRIG), 181 to 201 (PSQF…VYLA), 209 to 229 (GELI…CEFY), and 235 to 255 (GIGF…IMFI). Residue arginine 152 participates in a 1,2-diacyl-sn-glycero-3-phospho-(1'-sn-glycerol) binding.

This sequence belongs to the Lgt family.

The protein resides in the cell inner membrane. It carries out the reaction L-cysteinyl-[prolipoprotein] + a 1,2-diacyl-sn-glycero-3-phospho-(1'-sn-glycerol) = an S-1,2-diacyl-sn-glyceryl-L-cysteinyl-[prolipoprotein] + sn-glycerol 1-phosphate + H(+). The protein operates within protein modification; lipoprotein biosynthesis (diacylglyceryl transfer). In terms of biological role, catalyzes the transfer of the diacylglyceryl group from phosphatidylglycerol to the sulfhydryl group of the N-terminal cysteine of a prolipoprotein, the first step in the formation of mature lipoproteins. The polypeptide is Phosphatidylglycerol--prolipoprotein diacylglyceryl transferase (Campylobacter jejuni subsp. doylei (strain ATCC BAA-1458 / RM4099 / 269.97)).